The primary structure comprises 247 residues: Caffeoyl-CoA O-methyltransferase 2 (247 aa).

K21 contacts substrate. S-adenosyl-L-methionine contacts are provided by residues T63, E85, G87–V88, S93, D111, and A140. D163 is a binding site for substrate. D163 provides a ligand contact to a divalent metal cation. D165 contacts S-adenosyl-L-methionine. Positions 189 and 190 each coordinate a divalent metal cation. N194 contacts substrate.

The protein belongs to the class I-like SAM-binding methyltransferase superfamily. Cation-dependent O-methyltransferase family. CCoAMT subfamily. A divalent metal cation serves as cofactor.

The catalysed reaction is (E)-caffeoyl-CoA + S-adenosyl-L-methionine = (E)-feruloyl-CoA + S-adenosyl-L-homocysteine + H(+). It functions in the pathway aromatic compound metabolism; phenylpropanoid biosynthesis. In terms of biological role, methylates caffeoyl-CoA to feruloyl-CoA and 5-hydroxyferuloyl-CoA to sinapoyl-CoA. Plays a role in the synthesis of feruloylated polysaccharides. Involved in the reinforcement of the plant cell wall. Also involved in the responding to wounding or pathogen challenge by the increased formation of cell wall-bound ferulic acid polymers. The protein is Caffeoyl-CoA O-methyltransferase 2 (CCOAOMT2) of Eucalyptus globulus (Tasmanian blue gum).